A 1210-amino-acid polypeptide reads, in one-letter code: MAAQSSLYNDDRNLLRIREKERRNQEAHQEKEAFPEKIPLFGEPYKTAKGDELSSRIQNMLGNYEEVKEFLSTKSHTHRLDASENRLGKPKYPLIPDKGSSIPSSSFHTSVHHQSIHTPASGPLSVGNISHNPKMAQPRTEPMPSLHAKSCGPPDSQHLTQDRLGQEGFGSSHHKKGDRRADGDHCASVTDSAPERELSPLISLPSPVPPLSPIHSNQQTLPRTQGSSKVHGSSNNSKGYCPAKSPKDLAVKVHDKETPQDSLVAPAQPPSQTFPPPSLPSKSVAMQQKPTAYVRPMDGQDQAPSESPELKPLPEDYRQQTFEKTDLKVPAKAKLTKLKMPSQSVEQTYSNEVHCVEEILKEMTHSWPPPLTAIHTPSTAEPSKFPFPTKDSQHVSSVTQNQKQYDTSSKTHSNSQQGTSSMLEDDLQLSDSEDSDSEQTPEKPPSSSAPPSAPQSLPEPVASAHSSSAESESTSDSDSSSDSESESSSSDSEENEPLETPAPEPEPPTTNKWQLDNWLTKVSQPAAPPEGPRSTEPPRRHPESKGSSDSATSQEHSESKDPPPKSSSKAPRAPPEAPHPGKRSCQKSPAQQEPPQRQTVGTKQPKKPVKASARAGSRTSLQGEREPGLLPYGSRDQTSKDKPKVKTKGRPRAAASNEPKPAVPPSSEKKKHKSSLPAPSKALSGPEPAKDNVEDRTPEHFALVPLTESQGPPHSGSGSRTSGCRQAVVVQEDSRKDRLPLPLRDTKLLSPLRDTPPPQSLMVKITLDLLSRIPQPPGKGSRQRKAEDKQPPAGKKHSSEKRSSDSSSKLAKKRKGEAERDCDNKKIRLEKEIKSQSSSSSSSHKESSKTKPSRPSSQSSKKEMLPPPPVSSSSQKPAKPALKRSRREADTCGQDPPKSASSTKSNHKDSSIPKQRRVEGKGSRSSSEHKGSSGDTANPFPVPSLPNGNSKPGKPQVKFDKQQADLHMREAKKMKQKAELMTDRVGKAFKYLEAVLSFIECGIATESESQSSKSAYSVYSETVDLIKFIMSLKSFSDATAPTQEKIFAVLCMRCQSILNMAMFRCKKDIAIKYSRTLNKHFESSSKVAQAPSPCIASTGTPSPLSPMPSPASSVGSQSSAGSVGSSGVAATISTPVTIQNMTSSYVTITSHVLTAFDLWEQAEALTRKNKEFFARLSTNVCTLALNSSLVDLVHYTRQGFQQLQELTKTP.

Disordered regions lie at residues 1 to 45 (MAAQ…GEPY), 73 to 314 (TKSH…KPLP), 366 to 957 (SWPP…KPQV), and 1098 to 1119 (TGTP…SQSS). Basic and acidic residues-rich tracts occupy residues 9-35 (NDDR…EAFP) and 78-87 (HRLDASENRL). Phosphoserine is present on residues serine 199, serine 206, and serine 212. A compositionally biased stretch (polar residues) spans 215–238 (HSNQQTLPRTQGSSKVHGSSNNSK). Phosphothreonine is present on threonine 220. Residues 245–259 (SPKDLAVKVHDKETP) are compositionally biased toward basic and acidic residues. Pro residues predominate over residues 267 to 279 (AQPPSQTFPPPSL). Residues 394–419 (HVSSVTQNQKQYDTSSKTHSNSQQGT) show a composition bias toward polar residues. The span at 423-439 (LEDDLQLSDSEDSDSEQ) shows a compositional bias: acidic residues. Residues 442-453 (EKPPSSSAPPSA) are compositionally biased toward pro residues. The span at 454–472 (PQSLPEPVASAHSSSAESE) shows a compositional bias: low complexity. The span at 473-497 (STSDSDSSSDSESESSSSDSEENEP) shows a compositional bias: acidic residues. Residues 536 to 546 (EPPRRHPESKG) show a composition bias toward basic and acidic residues. The segment covering 586-602 (QKSPAQQEPPQRQTVGT) has biased composition (polar residues). Serine 588 is subject to Phosphoserine. Lysine 681 carries the N6-acetyllysine modification. Residues 688-699 (PAKDNVEDRTPE) show a composition bias toward basic and acidic residues. The residue at position 697 (threonine 697) is a Phosphothreonine. Over residues 707–724 (TESQGPPHSGSGSRTSGC) the composition is skewed to polar residues. A compositionally biased stretch (basic and acidic residues) spans 732–747 (EDSRKDRLPLPLRDTK). At serine 750 the chain carries Phosphoserine. Threonine 755 carries the post-translational modification Phosphothreonine. Over residues 816 to 834 (GEAERDCDNKKIRLEKEIK) the composition is skewed to basic and acidic residues. Residues 871–880 (SSSSQKPAKP) are compositionally biased toward low complexity. A compositionally biased stretch (basic and acidic residues) spans 906–932 (NHKDSSIPKQRRVEGKGSRSSSEHKGS). A compositionally biased stretch (low complexity) spans 1110–1119 (PASSVGSQSS).

It belongs to the AF4 family. Component of the super elongation complex (SEC), at least composed of EAF1, EAF2, CDK9, MLLT3/AF9, AFF (AFF1 or AFF4), the P-TEFb complex and ELL (ELL, ELL2 or ELL3).

Its subcellular location is the nucleus. This is AF4/FMR2 family member 1 (AFF1) from Homo sapiens (Human).